The sequence spans 710 residues: FAST kinase domain-containing protein 2, mitochondrial (710 aa).

Phosphoserine is present on residues Ser-126 and Ser-140. Positions 634-691 (VAVLCVSRSAYCLGSSHPRGFLAMKMRHLNAMGFHVILVNNWEMDKLEMEDAVTFLKT) constitute an RAP domain. Phosphoserine is present on Ser-708.

This sequence belongs to the FAST kinase family. As to quaternary structure, monomer. Found in a complex with GRSF1, DDX28, DHX30 and FASTKD5. Associates with the 16S mitochondrial rRNA (16S mt-rRNA). Forms a regulatory protein-RNA complex, consisting of RCC1L, NGRN, RPUSD3, RPUSD4, TRUB2, FASTKD2 and 16S mt-rRNA. As to expression, expression detected in spleen, thymus, testis, ovary, colon, heart, smooth muscle, kidney, brain, lung, liver and white adipose tissue with highest expression in heart, smooth muscle and thyroid.

It is found in the mitochondrion matrix. The protein resides in the mitochondrion nucleoid. Its function is as follows. Plays an important role in assembly of the mitochondrial large ribosomal subunit. As a component of a functional protein-RNA module, consisting of RCC1L, NGRN, RPUSD3, RPUSD4, TRUB2, FASTKD2 and 16S mitochondrial ribosomal RNA (16S mt-rRNA), controls 16S mt-rRNA abundance and is required for intra-mitochondrial translation. May play a role in mitochondrial apoptosis. This Homo sapiens (Human) protein is FAST kinase domain-containing protein 2, mitochondrial.